The following is a 362-amino-acid chain: MKPYLLLTPGPLTTSETVKETMMTDWCTWDEDYNLHIVEALRKELVGIATRNTEEYTSVLLQGSGTYCVEAVIGAAIGKNDKLLICSNGAYGDRMGNIAEYYHIDYELLAFDETEQVSVDYVDDYLSNNSDVTHVAFVHCETTTGILNPLKELAHVVKMHGKKLIVDAMSSFGGIPMDVSELGIDFLISSANKCIQGVPGFGFIIARRSELVRCKGVARSLSLDIYDQWETMEKGHGKWRFTSPTHVVRAFKQALTELIEEGGVEARHRRYCENHRVLVEGMRSLGFVTLLDDAIQSPIITSFLYPKTGFDFKAFYTALKSKGFVIYPGKISKADTFRIGNIGDVHPEDFARLVEVVRETEY.

The residue at position 193 (K193) is an N6-(pyridoxal phosphate)lysine.

Belongs to the class-V pyridoxal-phosphate-dependent aminotransferase family. PhnW subfamily. Homodimer. Pyridoxal 5'-phosphate serves as cofactor.

It carries out the reaction (2-aminoethyl)phosphonate + pyruvate = phosphonoacetaldehyde + L-alanine. Its function is as follows. Involved in phosphonate degradation. This chain is 2-aminoethylphosphonate--pyruvate transaminase, found in Bacteroides fragilis (strain YCH46).